The following is a 99-amino-acid chain: uncharacterized protein (99 aa).

The N-terminal stretch at methionine 1–glycine 17 is a signal peptide. Cysteine 18 carries N-palmitoyl cysteine lipidation. Cysteine 18 is lipidated: S-diacylglycerol cysteine.

It is found in the cell membrane. This is an uncharacterized protein from Escherichia coli O6:H1 (strain CFT073 / ATCC 700928 / UPEC).